We begin with the raw amino-acid sequence, 352 residues long: Histidine biosynthesis bifunctional protein HisB (352 aa).

The tract at residues 1–164 (MSQKILFIDR…EIENEILSSF (164 aa)) is histidinol-phosphatase. The Nucleophile role is filled by D9. 2 residues coordinate Mg(2+): D9 and D11. Catalysis depends on D11, which acts as the Proton donor. The Zn(2+) site is built by C93, H95, C101, and C103. A Mg(2+)-binding site is contributed by D130. The imidazoleglycerol-phosphate dehydratase stretch occupies residues 165–352 (RSASYQRTTK…ENLASSKGVI (188 aa)).

The protein in the N-terminal section; belongs to the histidinol-phosphatase family. It in the C-terminal section; belongs to the imidazoleglycerol-phosphate dehydratase family. Mg(2+) serves as cofactor. Requires Zn(2+) as cofactor.

The protein resides in the cytoplasm. The enzyme catalyses D-erythro-1-(imidazol-4-yl)glycerol 3-phosphate = 3-(imidazol-4-yl)-2-oxopropyl phosphate + H2O. It catalyses the reaction L-histidinol phosphate + H2O = L-histidinol + phosphate. It participates in amino-acid biosynthesis; L-histidine biosynthesis; L-histidine from 5-phospho-alpha-D-ribose 1-diphosphate: step 6/9. The protein operates within amino-acid biosynthesis; L-histidine biosynthesis; L-histidine from 5-phospho-alpha-D-ribose 1-diphosphate: step 8/9. The polypeptide is Histidine biosynthesis bifunctional protein HisB (Campylobacter jejuni subsp. doylei (strain ATCC BAA-1458 / RM4099 / 269.97)).